The sequence spans 347 residues: NADH-ubiquinone oxidoreductase chain 2 (347 aa).

11 helical membrane passes run 3–23, 25–45, 59–79, 96–116, 122–144, 149–171, 178–198, 202–222, 247–267, 276–296, and 326–346; these read PLIF…VMMS, HWLM…PLLM, YFLT…INLL, IIMT…FWVP, ISLS…VLYV, INLD…GGLN, ILAY…VFNP, LLNL…FMVA, IMLS…WMII, ITLA…YMRL, and LPVL…ITLL.

It belongs to the complex I subunit 2 family. As to quaternary structure, core subunit of respiratory chain NADH dehydrogenase (Complex I) which is composed of 45 different subunits. Interacts with TMEM242.

It localises to the mitochondrion inner membrane. It catalyses the reaction a ubiquinone + NADH + 5 H(+)(in) = a ubiquinol + NAD(+) + 4 H(+)(out). Core subunit of the mitochondrial membrane respiratory chain NADH dehydrogenase (Complex I) which catalyzes electron transfer from NADH through the respiratory chain, using ubiquinone as an electron acceptor. Essential for the catalytic activity and assembly of complex I. This is NADH-ubiquinone oxidoreductase chain 2 from Saccopteryx bilineata (Greater white-lined bat).